Reading from the N-terminus, the 20-residue chain is Antifungal protein (20 aa).

Belongs to the protease inhibitor I3 (leguminous Kunitz-type inhibitor) family.

Inhibits soybean trypsin. Has antifungal activity against R.cerealis, A.brassicae and A.niger, and weak antifungal activity against F.oxysporum. The protein is Antifungal protein of Cullen corylifolium (Malaysian scurfpea).